We begin with the raw amino-acid sequence, 116 residues long: Large ribosomal subunit protein uL18 (116 aa).

The protein belongs to the universal ribosomal protein uL18 family. In terms of assembly, part of the 50S ribosomal subunit; part of the 5S rRNA/L5/L18/L25 subcomplex. Contacts the 5S and 23S rRNAs.

Its function is as follows. This is one of the proteins that bind and probably mediate the attachment of the 5S RNA into the large ribosomal subunit, where it forms part of the central protuberance. This chain is Large ribosomal subunit protein uL18, found in Shewanella frigidimarina (strain NCIMB 400).